The primary structure comprises 91 residues: Conotoxin Im9.1 (91 aa).

A signal peptide spans 1–23 (MSKVGVVPLIFLVLLSIAALQNG). The propeptide occupies 24–55 (DDPRRQRDEKQSPQGDILRSTLTKYSYNIQRR). Intrachain disulfides connect C56–C72, C63–C83, and C66–C86.

It belongs to the conotoxin M superfamily. As to expression, expressed by the venom duct.

The protein localises to the secreted. In terms of biological role, probable neurotoxin. This is Conotoxin Im9.1 from Conus imperialis (Imperial cone).